Reading from the N-terminus, the 245-residue chain is Complement C1q subcomponent subunit A (245 aa).

Positions 1-22 (METSQGWLVACVLAVTLVWTVA) are cleaved as a signal peptide. Positions 31 to 109 (GKDGVAGIPG…KGVKGNPGNI (79 aa)) constitute a Collagen-like domain. The disordered stretch occupies residues 35-111 (VAGIPGRPGR…VKGNPGNIRD (77 aa)). Pro39 and Pro45 each carry 4-hydroxyproline. A 5-hydroxylysine modification is found at Lys48. O-linked (Gal...) hydroxylysine glycosylation is present at Lys48. A 4-hydroxyproline modification is found at Pro54. Residue Lys67 is modified to 5-hydroxylysine. Lys67 carries an O-linked (Gal...) hydroxylysine glycan. Residues Pro79 and Pro85 each carry the 4-hydroxyproline modification. Lys100 is subject to 5-hydroxylysine. The O-linked (Gal...) hydroxylysine glycan is linked to Lys100. Positions 110–245 (RDQPRPAFSA…FSGFLIFPSA (136 aa)) constitute a C1q domain. An N-linked (GlcNAc...) asparagine glycan is attached at Asn146. Cys172 and Cys190 form a disulfide bridge. Gln199 contacts Ca(2+).

Core component of the complement C1 complex, a calcium-dependent complex composed of 1 molecule of the C1Q subcomplex, 2 molecules of C1R and 2 molecules of C1S. The C1Q subcomplex is composed 18 subunits: 3 chains of C1QA, C1QB, and C1QC trimerize to form 6 collagen-like triple helices connected to six globular ligand-recognition modules (C1q domain). Interacts with CR1 (via Sushi 24 and Sushi 25 domains). Interacts (via C-terminus) with CD33; this interaction activates CD33 inhibitory motifs. In terms of processing, O-linked glycans are assumed to be the Glc-Gal disaccharides typically found as secondary modifications of hydroxylated lysines in collagen-like domains.

It localises to the secreted. Its subcellular location is the cell surface. Its activity is regulated as follows. The C1Q subcomplex is inhibited by sulfated molecules, such as triterpenoid sulfates, heparan sulfate, or chondroitin sulfates. Core component of the complement C1 complex, a multiprotein complex that initiates the classical pathway of the complement system, a cascade of proteins that leads to phagocytosis and breakdown of pathogens and signaling that strengthens the adaptive immune system. The classical complement pathway is initiated by the C1Q subcomplex of the C1 complex, which specifically binds IgG or IgM immunoglobulins complexed with antigens, forming antigen-antibody complexes on the surface of pathogens: C1QA, together with C1QB and C1QC, specifically recognizes and binds the Fc regions of IgG or IgM via its C1q domain. Immunoglobulin-binding activates the proenzyme C1R, which cleaves C1S, initiating the proteolytic cascade of the complement system. The C1Q subcomplex is activated by a hexamer of IgG complexed with antigens, while it is activated by a pentameric IgM. The C1Q subcomplex also recognizes and binds phosphatidylserine exposed on the surface of cells undergoing programmed cell death, possibly promoting activation of the complement system. The polypeptide is Complement C1q subcomponent subunit A (Rattus norvegicus (Rat)).